A 218-amino-acid polypeptide reads, in one-letter code: Glutathione S-transferase Mu 2 (218 aa).

The GST N-terminal domain occupies 2–88 (PMTLGYWNIR…YIARKHNLCG (87 aa)). Position 7–8 (7–8 (YW)) interacts with glutathione. 2 positions are modified to phosphoserine: serine 27 and serine 44. Glutathione is bound by residues 43-46 (RSQW), lysine 50, 59-60 (NL), and 72-73 (QS). In terms of domain architecture, GST C-terminal spans 90-208 (TEKEKIREDI…KSSRFLPRPV (119 aa)). A substrate-binding site is contributed by tyrosine 116.

It belongs to the GST superfamily. Mu family. Homodimer.

The protein localises to the cytoplasm. It catalyses the reaction RX + glutathione = an S-substituted glutathione + a halide anion + H(+). The enzyme catalyses 11(S)-hydroxy-14(S),15(S)-epoxy-(5Z,8Z,12E)-eicosatrienoate + glutathione = (11S,15S)-dihydroxy-14(R)-S-glutathionyl-(5Z,8Z,12E)-eicosatrienoate. Functionally, conjugation of reduced glutathione to a wide number of exogenous and endogenous hydrophobic electrophiles. Participates in the formation of novel hepoxilin regioisomers. Has activity toward aflatoxin B(1)-8,9-epoxide (AFBO). In Macaca fascicularis (Crab-eating macaque), this protein is Glutathione S-transferase Mu 2 (GSTM2).